Consider the following 249-residue polypeptide: tRNA (guanine-N(1)-)-methyltransferase (249 aa).

S-adenosyl-L-methionine contacts are provided by residues G113 and 133–138; that span reads IGDFVL.

The protein belongs to the RNA methyltransferase TrmD family. In terms of assembly, homodimer.

The protein localises to the cytoplasm. The catalysed reaction is guanosine(37) in tRNA + S-adenosyl-L-methionine = N(1)-methylguanosine(37) in tRNA + S-adenosyl-L-homocysteine + H(+). Specifically methylates guanosine-37 in various tRNAs. The protein is tRNA (guanine-N(1)-)-methyltransferase of Aliivibrio salmonicida (strain LFI1238) (Vibrio salmonicida (strain LFI1238)).